The sequence spans 359 residues: snRNA-activating protein complex subunit 2 (359 aa).

Residues 1–11 (MKPPQRRRRVP) show a composition bias toward basic residues. Disordered regions lie at residues 1–22 (MKPPQRRRRVPARYVGEATGPT), 157–221 (NQDG…GSST), and 291–327 (TALPGEKRPRPGTEDGGTGSTGPEEPDQASPQASEPI).

Part of the SNAPc complex composed of 5 subunits: SNAPC1, SNAPC2, SNAPC3, SNAPC4 and SNAPC5. SNAPC2 interacts with TBP and SNAPC4.

Its subcellular location is the nucleus. Part of the SNAPc complex required for the transcription of both RNA polymerase II and III small-nuclear RNA genes. Binds to the proximal sequence element (PSE), a non-TATA-box basal promoter element common to these 2 types of genes. Recruits TBP and BRF2 to the U6 snRNA TATA box. The protein is snRNA-activating protein complex subunit 2 (Snapc2) of Mus musculus (Mouse).